Here is a 359-residue protein sequence, read N- to C-terminus: MGDWSFLGEFLEEVHKHSTVIGKVWLTVLFIFRMLVLGTAAESSWGDEQADFLCDTMQPGCENVCYDQAFPISHIRYWVLQVIFVSTPSLVYLGHAVHMVRVQEKRKLLREAERAKEARAAGSYEYPVAEKTELSCWEEVNGRIALQGSLLNTYVCSILIRTTMEVAFIVGQYLLYGVFLDTLHVCRRSPCPHPVNCYVSRPTEKNVFIVFMLAVAGLSLFLSLAELYHLGWKKIRQRYVKSQPGVGECQLPGPSAGRVQSCTPPPDFNQCLENGPGGKFFSPFSNKMASQQNTDNLSTEQVRSQEQIQREGFIHIRYAQKPEVPNEGSPGPSLPHGYQSDKRRLSKASSKARSDDLSV.

Topologically, residues 1–19 (MGDWSFLGEFLEEVHKHST) are cytoplasmic. A helical membrane pass occupies residues 20–40 (VIGKVWLTVLFIFRMLVLGTA). Over 41–76 (AESSWGDEQADFLCDTMQPGCENVCYDQAFPISHIR) the chain is Extracellular. The helical transmembrane segment at 77–97 (YWVLQVIFVSTPSLVYLGHAV) threads the bilayer. The Cytoplasmic segment spans residues 98-165 (HMVRVQEKRK…CSILIRTTME (68 aa)). Residues 166–186 (VAFIVGQYLLYGVFLDTLHVC) form a helical membrane-spanning segment. Over 187-206 (RRSPCPHPVNCYVSRPTEKN) the chain is Extracellular. The helical transmembrane segment at 207-227 (VFIVFMLAVAGLSLFLSLAEL) threads the bilayer. Residues 228 to 359 (YHLGWKKIRQ…SKARSDDLSV (132 aa)) lie on the Cytoplasmic side of the membrane. 2 disordered regions span residues 285-305 (SNKM…VRSQ) and 317-359 (RYAQ…DLSV). 2 positions are modified to phosphoserine: S354 and S358.

It belongs to the connexin family. Alpha-type (group II) subfamily. A connexon is composed of a hexamer of connexins.

It localises to the cell membrane. The protein resides in the cell junction. Its subcellular location is the gap junction. Its function is as follows. One gap junction consists of a cluster of closely packed pairs of transmembrane channels, the connexons, through which materials of low MW diffuse from one cell to a neighboring cell. This chain is Gap junction alpha-5 protein (GJA5), found in Bos taurus (Bovine).